The primary structure comprises 148 residues: Large ribosomal subunit protein uL15 (148 aa).

The tract at residues 1-61 (MELNNLKPAI…GGQMPMQRRL (61 aa)) is disordered. The span at 30 to 39 (TATKGHKGQK) shows a compositional bias: basic residues.

This sequence belongs to the universal ribosomal protein uL15 family. As to quaternary structure, part of the 50S ribosomal subunit.

Its function is as follows. Binds to the 23S rRNA. This chain is Large ribosomal subunit protein uL15, found in Geobacter metallireducens (strain ATCC 53774 / DSM 7210 / GS-15).